Here is a 193-residue protein sequence, read N- to C-terminus: dCTP deaminase (193 aa).

DCTP-binding positions include 110–115, D128, 136–138, Y171, K178, and Q182; these read RSSLAR and VLE. E138 functions as the Proton donor/acceptor in the catalytic mechanism. The disordered stretch occupies residues 170 to 193; sequence PYNSRQDAKYRGQQGAVASRIDKD.

This sequence belongs to the dCTP deaminase family. Homotrimer.

It catalyses the reaction dCTP + H2O + H(+) = dUTP + NH4(+). The protein operates within pyrimidine metabolism; dUMP biosynthesis; dUMP from dCTP (dUTP route): step 1/2. Functionally, catalyzes the deamination of dCTP to dUTP. This is dCTP deaminase from Yersinia enterocolitica serotype O:8 / biotype 1B (strain NCTC 13174 / 8081).